A 243-amino-acid chain; its full sequence is Thaumatin-like protein 1 (243 aa).

A signal peptide spans 1-22 (MMKTLALYGLTLALFFLSGAHS). 8 disulfides stabilise this stretch: Cys31/Cys242, Cys79/Cys88, Cys93/Cys100, Cys148/Cys231, Cys153/Cys214, Cys161/Cys177, Cys181/Cys190, and Cys191/Cys201.

This sequence belongs to the thaumatin family.

Its subcellular location is the secreted. The protein resides in the extracellular space. The protein localises to the apoplast. Functionally, possesses antifungal activity. This is Thaumatin-like protein 1 (TL1) from Castanea sativa (Sweet chestnut).